The chain runs to 341 residues: Paired box protein Pax-9 (341 aa).

The segment at residues 4 to 130 (AFGEVNQLGG…SSISRILRNK (127 aa)) is a DNA-binding region (paired). The interval 7–63 (EVNQLGGVFVNGRPLPNAIRLRIVELAQLGIRPCDISRQLRVSHGCVSKILARYNET) is PAI subdomain. The RED subdomain stretch occupies residues 82–130 (TVVKHIRTYKQRDPGIFAWEIRDRLLADGVCDKYNVPSVSSISRILRNK). An interaction with KDM5B region spans residues 168-189 (AAAAKVPTPPGVPAIPGSVAMP).

Interacts with KDM5B.

The protein resides in the nucleus. Functionally, transcription factor required for normal development of thymus, parathyroid glands, ultimobranchial bodies, teeth, skeletal elements of skull and larynx as well as distal limbs. The sequence is that of Paired box protein Pax-9 (PAX9) from Propithecus coquereli (Coquerel's sifaka).